We begin with the raw amino-acid sequence, 102 residues long: PqqA binding protein (102 aa).

The protein belongs to the PqqD family. Monomer. Interacts with PqqE.

The protein operates within cofactor biosynthesis; pyrroloquinoline quinone biosynthesis. Functionally, functions as a PqqA binding protein and presents PqqA to PqqE, in the pyrroloquinoline quinone (PQQ) biosynthetic pathway. In Rhodopseudomonas palustris (strain HaA2), this protein is PqqA binding protein.